Consider the following 759-residue polypeptide: Glycerophosphodiester phosphodiesterase GDPDL3 (759 aa).

Positions 1-27 are cleaved as a signal peptide; sequence MRGLLRASSLLLCGVILIQLLAAQIHA. At 28–738 the chain is on the extracellular side; the sequence is QSKKPKSPWP…TNAQAPSGQT (711 aa). The GP-PDE 1 domain occupies 44–344; sequence PLVIARGGFS…DFPITASASL (301 aa). N-linked (GlcNAc...) asparagine glycosylation is found at Asn-99, Asn-186, Asn-242, Asn-251, Asn-326, Asn-353, Asn-413, Asn-424, Asn-488, Asn-528, Asn-540, and Asn-647. Residues 360 to 661 enclose the GP-PDE 2 domain; that stretch reads FLVITKDGAS…EFPFTAARYK (302 aa). The interval 702 to 734 is disordered; sequence FTDADVTEPPLPPVTAKAPTSSPGTPSTNAQAP. The span at 719–734 shows a compositional bias: polar residues; sequence APTSSPGTPSTNAQAP. A helical transmembrane segment spans residues 739-759; sequence RITLSLLLSVFAMVLASLLLL.

The protein belongs to the glycerophosphoryl diester phosphodiesterase family. Expressed in roots, shoots, rosette and cauline leaves, stems, flowers and siliques.

The protein resides in the cell membrane. The enzyme catalyses a sn-glycero-3-phosphodiester + H2O = an alcohol + sn-glycerol 3-phosphate + H(+). Involved in primary cell wall organization. Required for the accumulation of crystalline cellulose. The sequence is that of Glycerophosphodiester phosphodiesterase GDPDL3 from Arabidopsis thaliana (Mouse-ear cress).